Here is a 360-residue protein sequence, read N- to C-terminus: NAD(P)H-quinone oxidoreductase subunit 1, chloroplastic (360 aa).

8 consecutive transmembrane segments (helical) span residues 30 to 50, 98 to 118, 127 to 147, 165 to 185, 203 to 223, 253 to 273, 297 to 317, and 340 to 360; these read FLPI…LVWL, FSIG…VIPF, FNIG…GLLM, AAQS…ISLL, FWGW…ISSL, FGLF…FVTV, IFGT…FLFI, and FLLP…VFSL.

Belongs to the complex I subunit 1 family. NDH is composed of at least 16 different subunits, 5 of which are encoded in the nucleus.

Its subcellular location is the plastid. It is found in the chloroplast thylakoid membrane. The catalysed reaction is a plastoquinone + NADH + (n+1) H(+)(in) = a plastoquinol + NAD(+) + n H(+)(out). It catalyses the reaction a plastoquinone + NADPH + (n+1) H(+)(in) = a plastoquinol + NADP(+) + n H(+)(out). NDH shuttles electrons from NAD(P)H:plastoquinone, via FMN and iron-sulfur (Fe-S) centers, to quinones in the photosynthetic chain and possibly in a chloroplast respiratory chain. The immediate electron acceptor for the enzyme in this species is believed to be plastoquinone. Couples the redox reaction to proton translocation, and thus conserves the redox energy in a proton gradient. The chain is NAD(P)H-quinone oxidoreductase subunit 1, chloroplastic from Aethionema cordifolium (Lebanon stonecress).